The primary structure comprises 74 residues: UPF0435 protein BcerKBAB4_0386 (74 aa).

The protein belongs to the UPF0435 family.

The chain is UPF0435 protein BcerKBAB4_0386 from Bacillus mycoides (strain KBAB4) (Bacillus weihenstephanensis).